The sequence spans 207 residues: Inhibitor of hydrogen peroxide resistance (207 aa).

The segment at residues 163 to 182 (MNYIHQRTRISRSVVAEVLA) is a DNA-binding region (H-T-H motif).

This sequence belongs to the IprA family.

Its function is as follows. Involved in oxidative stress resistance. This Escherichia coli O157:H7 protein is Inhibitor of hydrogen peroxide resistance.